The chain runs to 376 residues: PqqA peptide cyclase (376 aa).

Residues 7 to 222 form the Radical SAM core domain; that stretch reads VGLPLWLLAE…TNEYRDKLKA (216 aa). C21, C25, and C28 together coordinate [4Fe-4S] cluster.

Belongs to the radical SAM superfamily. PqqE family. Interacts with PqqD. The interaction is necessary for activity of PqqE. It depends on [4Fe-4S] cluster as a cofactor.

The catalysed reaction is [PQQ precursor protein] + S-adenosyl-L-methionine = E-Y cross-linked-[PQQ precursor protein] + 5'-deoxyadenosine + L-methionine + H(+). It participates in cofactor biosynthesis; pyrroloquinoline quinone biosynthesis. Catalyzes the cross-linking of a glutamate residue and a tyrosine residue in the PqqA protein as part of the biosynthesis of pyrroloquinoline quinone (PQQ). This chain is PqqA peptide cyclase, found in Pseudomonas putida (strain ATCC 700007 / DSM 6899 / JCM 31910 / BCRC 17059 / LMG 24140 / F1).